The following is a 293-amino-acid chain: Bis(5'-nucleosyl)-tetraphosphatase, symmetrical (293 aa).

Belongs to the Ap4A hydrolase family.

The catalysed reaction is P(1),P(4)-bis(5'-adenosyl) tetraphosphate + H2O = 2 ADP + 2 H(+). Hydrolyzes diadenosine 5',5'''-P1,P4-tetraphosphate to yield ADP. This Pseudomonas fluorescens (strain Pf0-1) protein is Bis(5'-nucleosyl)-tetraphosphatase, symmetrical.